The primary structure comprises 150 residues: Large ribosomal subunit protein uL13 (150 aa).

The disordered stretch occupies residues 130-150 (EHPHGAQQPQPYQLNPSASIK). Polar residues predominate over residues 136–150 (QQPQPYQLNPSASIK).

Belongs to the universal ribosomal protein uL13 family. As to quaternary structure, part of the 50S ribosomal subunit.

Functionally, this protein is one of the early assembly proteins of the 50S ribosomal subunit, although it is not seen to bind rRNA by itself. It is important during the early stages of 50S assembly. This is Large ribosomal subunit protein uL13 from Synechococcus sp. (strain RCC307).